Reading from the N-terminus, the 171-residue chain is Large ribosomal subunit protein bL9 (171 aa).

This sequence belongs to the bacterial ribosomal protein bL9 family.

In terms of biological role, binds to the 23S rRNA. The protein is Large ribosomal subunit protein bL9 of Rickettsia felis (strain ATCC VR-1525 / URRWXCal2) (Rickettsia azadi).